The chain runs to 466 residues: Muscarinic acetylcholine receptor M2 (466 aa).

The Extracellular segment spans residues 1–22 (MNNSTNSSNSGLALTSPYKTFE). 3 N-linked (GlcNAc...) asparagine glycosylation sites follow: N2, N3, and N6. The chain crosses the membrane as a helical span at residues 23 to 45 (VVFIVLVAGSLSLVTIIGNILVM). The Cytoplasmic portion of the chain corresponds to 46–59 (VSIKVNRHLQTVNN). Residues 60–80 (YFLFSLACADLIIGVFSMNLY) traverse the membrane as a helical segment. Over 81–97 (TLYTVIGYWPLGPVVCD) the chain is Extracellular. Residues C96 and C176 are joined by a disulfide bond. A helical transmembrane segment spans residues 98 to 119 (LWLALDYVVSNASVMNLLIISF). The short motif at 120 to 122 (DRY) is the Important for signaling element. The Cytoplasmic portion of the chain corresponds to 120 to 139 (DRYFCVTKPLTYPVKRTTKM). A helical membrane pass occupies residues 140-162 (AGMMIAAAWVLSFILWAPAILFW). Topologically, residues 163 to 184 (QFIVGVRTVEDGECYIQFFSNA) are extracellular. A helical membrane pass occupies residues 185–209 (AVTFGTAIAAFYLPVIIMTVLYWHI). Residues 210–387 (SRASKSRIKK…PPSREKKVTR (178 aa)) lie on the Cytoplasmic side of the membrane. Positions 218–320 (KKDKKEPVAN…SLGHSKDENS (103 aa)) are disordered. At S232 the chain carries Phosphoserine. Positions 254 to 270 (ALEHNKIQNGKAPRDAV) are enriched in basic and acidic residues. Polar residues-rich tracts occupy residues 284–293 (NDSTSVSAVA) and 304–313 (DENTVSTSLG). The helical transmembrane segment at 388-410 (TILAILLAFIITWAPYNVMVLIN) threads the bilayer. Residues 411–418 (TFCAPCIP) are Extracellular-facing. C413 and C416 form a disulfide bridge. The chain crosses the membrane as a helical span at residues 419-442 (NTVWTIGYWLCYINSTINPACYAL). The Important for signaling signature appears at 436-440 (NPACY). Residues 443-466 (CNATFKKTFKHLLMCHYKNIGATR) are Cytoplasmic-facing. Residues T446, T450, and T465 each carry the phosphothreonine modification.

The protein belongs to the G-protein coupled receptor 1 family. Muscarinic acetylcholine receptor subfamily. CHRM2 sub-subfamily. Interacts with ARRB1 and ARRB2. Interacts with RACK1; the interaction regulates CHRM2 internalization. Phosphorylated in response to agonist treatment.

The protein resides in the cell membrane. Its subcellular location is the postsynaptic cell membrane. Functionally, the muscarinic acetylcholine receptor mediates various cellular responses, including inhibition of adenylate cyclase, breakdown of phosphoinositides and modulation of potassium channels through the action of G proteins. Primary transducing effect is adenylate cyclase inhibition. In Sus scrofa (Pig), this protein is Muscarinic acetylcholine receptor M2 (CHRM2).